A 263-amino-acid chain; its full sequence is 3-methyl-2-oxobutanoate hydroxymethyltransferase (263 aa).

2 residues coordinate Mg(2+): D43 and D82. Residues 43-44, D82, and K111 contribute to the 3-methyl-2-oxobutanoate site; that span reads DS. Mg(2+) is bound at residue E113. The active-site Proton acceptor is E180.

Belongs to the PanB family. As to quaternary structure, homodecamer; pentamer of dimers. The cofactor is Mg(2+).

It is found in the cytoplasm. It carries out the reaction 3-methyl-2-oxobutanoate + (6R)-5,10-methylene-5,6,7,8-tetrahydrofolate + H2O = 2-dehydropantoate + (6S)-5,6,7,8-tetrahydrofolate. Its pathway is cofactor biosynthesis; (R)-pantothenate biosynthesis; (R)-pantoate from 3-methyl-2-oxobutanoate: step 1/2. Functionally, catalyzes the reversible reaction in which hydroxymethyl group from 5,10-methylenetetrahydrofolate is transferred onto alpha-ketoisovalerate to form ketopantoate. The polypeptide is 3-methyl-2-oxobutanoate hydroxymethyltransferase (Bdellovibrio bacteriovorus (strain ATCC 15356 / DSM 50701 / NCIMB 9529 / HD100)).